Reading from the N-terminus, the 251-residue chain is Cell division protein ZapD (251 aa).

This sequence belongs to the ZapD family. In terms of assembly, interacts with FtsZ.

The protein resides in the cytoplasm. Its function is as follows. Cell division factor that enhances FtsZ-ring assembly. Directly interacts with FtsZ and promotes bundling of FtsZ protofilaments, with a reduction in FtsZ GTPase activity. This chain is Cell division protein ZapD, found in Paraburkholderia xenovorans (strain LB400).